Here is a 144-residue protein sequence, read N- to C-terminus: High mobility group B protein 2 (144 aa).

2 stretches are compositionally biased toward basic and acidic residues: residues 1 to 12 and 73 to 94; these read MKGAKSKTETRS and AGDK…KAEK. 3 disordered regions span residues 1-42, 57-94, and 106-144; these read MKGA…KRPA, KKEN…KAEK, and YNKK…EDDD. Positions 38–107 form a DNA-binding region, HMG box; that stretch reads PKRPASAFFV…EYEKNIKAYN (70 aa). Serine 125 is subject to Phosphoserine. Positions 127–144 are enriched in acidic residues; the sequence is VNDEDDAEDGSEEEEDDD.

It belongs to the HMGB family. In terms of tissue distribution, mostly expressed in cotyledons, hypocotyls, leaves, and flowers (excluding pedicels), also present in roots and stems.

It localises to the nucleus. The protein localises to the cytoplasm. It is found in the cytosol. Its function is as follows. Binds preferentially double-stranded DNA. Confers sensitivity to salt and drought stresses. This Arabidopsis thaliana (Mouse-ear cress) protein is High mobility group B protein 2 (HMGB2).